The chain runs to 220 residues: Inner membrane protein YqjA (220 aa).

The Periplasmic segment spans residues Met-1–Met-27. Residues Leu-28 to Leu-48 traverse the membrane as a helical segment. The Cytoplasmic segment spans residues Pro-49–Ser-52. 2 helical membrane passes run Leu-53–Leu-73 and Leu-74–Gly-94. Residues Asn-95–Gln-154 lie on the Cytoplasmic side of the membrane. Residues Phe-155–Leu-175 traverse the membrane as a helical segment. The Periplasmic portion of the chain corresponds to Gly-176–Cys-191. The helical transmembrane segment at Leu-192 to Trp-212 threads the bilayer. Residues Lys-213–Gly-220 lie on the Cytoplasmic side of the membrane.

Belongs to the DedA family.

It localises to the cell inner membrane. In terms of biological role, may be a membrane transporter required for proton motive force (PMF)-dependent drug efflux. Required, with YghB, for the proper export of certain periplasmic amidases and, possibly, other Tat substrates. May play a role in determining membrane lipid composition. The chain is Inner membrane protein YqjA (yqjA) from Escherichia coli (strain K12).